A 665-amino-acid polypeptide reads, in one-letter code: Phosphatidylinositol-3-phosphate phosphatase MTMR1 (665 aa).

Position 1 is an N-acetylmethionine (methionine 1). The segment covering 1–11 has biased composition (low complexity); it reads MDRPAAAAAAG. A disordered region spans residues 1–51; that stretch reads MDRPAAAAAAGCEGGGGPNPGPAGGRRPPRAAGGATAGSRQPSVETLDSPT. Residues 12–24 show a composition bias toward gly residues; it reads CEGGGGPNPGPAG. Polar residues predominate over residues 39 to 51; the sequence is SRQPSVETLDSPT. Serine 43 and serine 49 each carry phosphoserine. Residues 90-161 form the GRAM domain; that stretch reads NKLAQMEEAP…GVISRVEKIG (72 aa). The 376-residue stretch at 226-601 folds into the Myotubularin phosphatase domain; that stretch reads GWKVYDPVSE…SHLELWVNYY (376 aa). Positions 351, 376, and 377 each coordinate a 1,2-diacyl-sn-glycero-3-phospho-(1D-myo-inositol-3-phosphate). Cysteine 438 (phosphocysteine intermediate) is an active-site residue. The a 1,2-diacyl-sn-glycero-3-phospho-(1D-myo-inositol-3-phosphate) site is built by serine 439, aspartate 440, glycine 441, tryptophan 442, aspartate 443, arginine 444, and arginine 484. Serine 439 is a phosphate binding site. 4 residues coordinate phosphate: glycine 441, tryptophan 442, aspartate 443, and arginine 444. The segment at 608-665 is required for dimerization; the sequence is MRPQMPIHQNLKELLAVRAELQKRVEGLQREVATRAVSSSSERGSSPSHSATSVHTSV. The segment at 642 to 665 is disordered; it reads RAVSSSSERGSSPSHSATSVHTSV. Residues 645 to 657 are compositionally biased toward low complexity; it reads SSSSERGSSPSHS.

It belongs to the protein-tyrosine phosphatase family. Non-receptor class myotubularin subfamily. As to quaternary structure, homodimer.

The protein resides in the cell membrane. It is found in the cytoplasm. The enzyme catalyses a 1,2-diacyl-sn-glycero-3-phospho-(1D-myo-inositol-3-phosphate) + H2O = a 1,2-diacyl-sn-glycero-3-phospho-(1D-myo-inositol) + phosphate. It carries out the reaction 1,2-dioctanoyl-sn-glycero-3-phospho-(1-D-myo-inositol-3-phosphate) + H2O = 1,2-dioctanoyl-sn-glycero-3-phospho-(1D-myo-inositol) + phosphate. The catalysed reaction is a 1,2-diacyl-sn-glycero-3-phospho-(1D-myo-inositol-3,5-bisphosphate) + H2O = a 1,2-diacyl-sn-glycero-3-phospho-(1D-myo-inositol-5-phosphate) + phosphate. Functionally, lipid phosphatase that specifically dephosphorylates the D-3 position of phosphatidylinositol 3-phosphate, generating phosphatidylinositol. Could also dephosphorylate phosphatidylinositol 3,5-bisphosphate to produce phosphatidylinositol 5-phosphate. In Homo sapiens (Human), this protein is Phosphatidylinositol-3-phosphate phosphatase MTMR1.